Consider the following 469-residue polypeptide: Glutamate--tRNA ligase (469 aa).

Residues 11-21 (PSPTGFIHLGN) carry the 'HIGH' region motif. Residues 243-247 (KMSKR) carry the 'KMSKS' region motif. Lys246 is a binding site for ATP.

It belongs to the class-I aminoacyl-tRNA synthetase family. Glutamate--tRNA ligase type 1 subfamily. Monomer.

The protein localises to the cytoplasm. The catalysed reaction is tRNA(Glu) + L-glutamate + ATP = L-glutamyl-tRNA(Glu) + AMP + diphosphate. Catalyzes the attachment of glutamate to tRNA(Glu) in a two-step reaction: glutamate is first activated by ATP to form Glu-AMP and then transferred to the acceptor end of tRNA(Glu). The polypeptide is Glutamate--tRNA ligase (Burkholderia lata (strain ATCC 17760 / DSM 23089 / LMG 22485 / NCIMB 9086 / R18194 / 383)).